Reading from the N-terminus, the 463-residue chain is ATP synthase subunit beta (463 aa).

151 to 158 is a binding site for ATP; that stretch reads GGAGVGKT.

The protein belongs to the ATPase alpha/beta chains family. In terms of assembly, F-type ATPases have 2 components, CF(1) - the catalytic core - and CF(0) - the membrane proton channel. CF(1) has five subunits: alpha(3), beta(3), gamma(1), delta(1), epsilon(1). CF(0) has three main subunits: a(1), b(2) and c(9-12). The alpha and beta chains form an alternating ring which encloses part of the gamma chain. CF(1) is attached to CF(0) by a central stalk formed by the gamma and epsilon chains, while a peripheral stalk is formed by the delta and b chains.

The protein localises to the cell membrane. It carries out the reaction ATP + H2O + 4 H(+)(in) = ADP + phosphate + 5 H(+)(out). Its function is as follows. Produces ATP from ADP in the presence of a proton gradient across the membrane. The catalytic sites are hosted primarily by the beta subunits. The sequence is that of ATP synthase subunit beta from Clostridium botulinum (strain Loch Maree / Type A3).